Here is a 39-residue protein sequence, read N- to C-terminus: Photosystem II reaction center protein J (39 aa).

A helical membrane pass occupies residues 7 to 27 (IPLWLVATIGGIAVLTVLGLF).

It belongs to the PsbJ family. As to quaternary structure, PSII is composed of 1 copy each of membrane proteins PsbA, PsbB, PsbC, PsbD, PsbE, PsbF, PsbH, PsbI, PsbJ, PsbK, PsbL, PsbM, PsbT, PsbX, PsbY, PsbZ, Psb30/Ycf12, at least 3 peripheral proteins of the oxygen-evolving complex and a large number of cofactors. It forms dimeric complexes.

Its subcellular location is the plastid. The protein localises to the chloroplast thylakoid membrane. In terms of biological role, one of the components of the core complex of photosystem II (PSII). PSII is a light-driven water:plastoquinone oxidoreductase that uses light energy to abstract electrons from H(2)O, generating O(2) and a proton gradient subsequently used for ATP formation. It consists of a core antenna complex that captures photons, and an electron transfer chain that converts photonic excitation into a charge separation. The polypeptide is Photosystem II reaction center protein J (Cyanidioschyzon merolae (strain NIES-3377 / 10D) (Unicellular red alga)).